A 423-amino-acid polypeptide reads, in one-letter code: Deoxyguanosinetriphosphate triphosphohydrolase-like protein (423 aa).

Positions 66–216 (RLTHSLEVAQ…MDFSDDIAYS (151 aa)) constitute an HD domain.

This sequence belongs to the dGTPase family. Type 2 subfamily.

The polypeptide is Deoxyguanosinetriphosphate triphosphohydrolase-like protein (Corynebacterium diphtheriae (strain ATCC 700971 / NCTC 13129 / Biotype gravis)).